Here is a 280-residue protein sequence, read N- to C-terminus: MATNKRTLSRIGFYCGLALFLIITLFPFFVMLMTSFKGAKEAISLHPTLLPQQWTLEHYVDIFNPMIFPFVDYFRNSLVVSVVSSVVAVFLGILGAYALSRLRFKGRMTINASFYTVYMFSGILLVVPLFKIITALGIYDTEMALIITMVTQTLPTAVFMLKSYFDTIPDEIEEAAMMDGLNRLQIIFRITVPLAMSGLISVFVYCFMVAWNDYLFASIFLSSASNFTLPVGLNALFSTPDYIWGRMMAASLVTALPVVIMYALSERFIKSGLTAGGVKG.

Over 1–10 (MATNKRTLSR) the chain is Cytoplasmic. A helical transmembrane segment spans residues 11 to 31 (IGFYCGLALFLIITLFPFFVM). Over 32 to 53 (LMTSFKGAKEAISLHPTLLPQQ) the chain is Periplasmic. A helical membrane pass occupies residues 54–74 (WTLEHYVDIFNPMIFPFVDYF). In terms of domain architecture, ABC transmembrane type-1 spans 74–265 (FRNSLVVSVV…LPVVIMYALS (192 aa)). Residues 75-77 (RNS) are Cytoplasmic-facing. A helical transmembrane segment spans residues 78 to 98 (LVVSVVSSVVAVFLGILGAYA). Topologically, residues 99-117 (LSRLRFKGRMTINASFYTV) are periplasmic. A helical transmembrane segment spans residues 118 to 138 (YMFSGILLVVPLFKIITALGI). At 139–140 (YD) the chain is on the cytoplasmic side. Residues 141-161 (TEMALIITMVTQTLPTAVFML) form a helical membrane-spanning segment. Residues 162 to 189 (KSYFDTIPDEIEEAAMMDGLNRLQIIFR) are Periplasmic-facing. A helical transmembrane segment spans residues 190 to 210 (ITVPLAMSGLISVFVYCFMVA). Topologically, residues 211-214 (WNDY) are cytoplasmic. A helical transmembrane segment spans residues 215-235 (LFASIFLSSASNFTLPVGLNA). At 236-242 (LFSTPDY) the chain is on the periplasmic side. The chain crosses the membrane as a helical span at residues 243–263 (IWGRMMAASLVTALPVVIMYA). At 264 to 280 (LSERFIKSGLTAGGVKG) the chain is on the cytoplasmic side.

It belongs to the binding-protein-dependent transport system permease family. MalFG subfamily.

It is found in the cell inner membrane. Functionally, probably part of the binding-protein-dependent transport system YcjNOP. Probably responsible for the translocation of the substrate across the membrane. The protein is Inner membrane ABC transporter permease protein YcjP (ycjP) of Escherichia coli (strain K12).